An 83-amino-acid polypeptide reads, in one-letter code: Putative protein T-ENOL (83 aa).

The interval 1 to 33 (MASTPMGNEGEKKSSWPSQAAPSLRGGPASLSR) is disordered.

In Homo sapiens (Human), this protein is Putative protein T-ENOL.